Consider the following 174-residue polypeptide: Protein C (174 aa).

Belongs to the morbillivirus protein C family.

The polypeptide is Protein C (P/V/C) (Canine distemper virus (strain Onderstepoort) (CDV)).